We begin with the raw amino-acid sequence, 296 residues long: Peptide transport system permease protein SapC (296 aa).

Residues 1–28 (MPYDSVYSEKRPPGTLRTAWRKFYSDAS) lie on the Cytoplasmic side of the membrane. A helical transmembrane segment spans residues 29-49 (AMVGLYGCAGLAVLCIFGGWF). Residues 50 to 98 (APYGIDQQFLGYQLLPPSWSRYGEVSFFLGTDDLGRDVLSRLLSGAAPT) lie on the Periplasmic side of the membrane. A helical membrane pass occupies residues 99–119 (VGGAFVVTLAATICGLVLGTF). In terms of domain architecture, ABC transmembrane type-1 spans 99 to 284 (VGGAFVVTLA…ISVLLVNLLG (186 aa)). Topologically, residues 120–133 (AGATHGLRSAVLNH) are cytoplasmic. A helical membrane pass occupies residues 134-154 (ILDTLLAIPSLLLAIIVVAFA). The Periplasmic segment spans residues 155-196 (GPSLSHAMFAVWLALLPRMVRSIYSMVHDELEKEYVIAARLD). A helical membrane pass occupies residues 197 to 217 (GASTLNILWFAVMPNITAGLV). Topologically, residues 218–222 (TEITR) are cytoplasmic. The chain crosses the membrane as a helical span at residues 223–243 (ALSMAILDIAALGFLDLGAQL). Residues 244 to 257 (PSPEWGAMLGDALE) lie on the Periplasmic side of the membrane. Residues 258 to 278 (LIYVAPWTVMLPGAAIMISVL) form a helical membrane-spanning segment. Residues 279–296 (LVNLLGDGVRRAIIAGVE) lie on the Cytoplasmic side of the membrane.

The protein belongs to the binding-protein-dependent transport system permease family. OppBC subfamily.

Its subcellular location is the cell inner membrane. Its function is as follows. Involved in a peptide intake transport system that plays a role in the resistance to antimicrobial peptides. This Escherichia coli O6:H1 (strain CFT073 / ATCC 700928 / UPEC) protein is Peptide transport system permease protein SapC (sapC).